Reading from the N-terminus, the 284-residue chain is ADP-polyphosphate phosphotransferase 3 (284 aa).

Composition is skewed to basic and acidic residues over residues 1–22 (MDKH…RKSA) and 260–277 (DLGK…DTRR). Disordered stretches follow at residues 1-32 (MDKH…TRSG) and 260-284 (DLGK…PNLF).

The protein belongs to the polyphosphate kinase 2 (PPK2) family. Class I subfamily.

The enzyme catalyses [phosphate](n) + ATP = [phosphate](n+1) + ADP. It carries out the reaction [phosphate](n) + GTP = [phosphate](n+1) + GDP. In terms of biological role, uses inorganic polyphosphate (polyP) as a donor to convert ADP to ATP. Can also convert GDP to GTP, with lower efficiency. This is ADP-polyphosphate phosphotransferase 3 from Rhizobium meliloti (strain 1021) (Ensifer meliloti).